Reading from the N-terminus, the 426-residue chain is 5-methylthioadenosine/S-adenosylhomocysteine deaminase (426 aa).

Residues H60 and H62 each contribute to the Zn(2+) site. Substrate contacts are provided by E89 and H179. Residue H206 coordinates Zn(2+). The substrate site is built by E209 and D294. D294 lines the Zn(2+) pocket.

This sequence belongs to the metallo-dependent hydrolases superfamily. MTA/SAH deaminase family. Zn(2+) serves as cofactor.

It catalyses the reaction S-adenosyl-L-homocysteine + H2O + H(+) = S-inosyl-L-homocysteine + NH4(+). The catalysed reaction is S-methyl-5'-thioadenosine + H2O + H(+) = S-methyl-5'-thioinosine + NH4(+). Its function is as follows. Catalyzes the deamination of 5-methylthioadenosine and S-adenosyl-L-homocysteine into 5-methylthioinosine and S-inosyl-L-homocysteine, respectively. Is also able to deaminate adenosine. This is 5-methylthioadenosine/S-adenosylhomocysteine deaminase from Dictyoglomus turgidum (strain DSM 6724 / Z-1310).